Consider the following 246-residue polypeptide: O-antigen export system ATP-binding protein RfbB (246 aa).

In terms of domain architecture, ABC transporter spans 22 to 246 (SGIKDLVFHP…IIELYKQAMA (225 aa)). Residue 63–70 (GRNGAGKS) coordinates ATP.

It belongs to the ABC transporter superfamily.

The protein resides in the cell inner membrane. May form an ATP-driven O-antigen export apparatus, in association with RfbA. This Klebsiella pneumoniae protein is O-antigen export system ATP-binding protein RfbB (rfbB).